A 706-amino-acid polypeptide reads, in one-letter code: Integrator complex subunit 13 (706 aa).

The disordered stretch occupies residues 564 to 603 (PPEEEERKKRGRKREDKEDKSEKAVKDYEQEKSWQDSERL). Positions 567–622 (EEERKKRGRKREDKEDKSEKAVKDYEQEKSWQDSERLKGILERGKEELAEAEIIKD) form a coiled coil. The short motif at 572-582 (KRGRKREDKED) is the Nuclear localization signal (NLS) element. Lys-611 is covalently cross-linked (Glycyl lysine isopeptide (Lys-Gly) (interchain with G-Cter in SUMO2)). Over residues 615 to 636 (AEAEIIKDSPDSPEPPNKKPLV) the composition is skewed to basic and acidic residues. The segment at 615–650 (AEAEIIKDSPDSPEPPNKKPLVEMDETPQVEKSKGP) is disordered. A phosphoserine mark is found at Ser-623, Ser-626, and Ser-678. The interval 649-694 (GPVSLLSLWSNRINTANSRKHQEFAGRLNSVNNRAELYQHLKEENG) is cleavage module binding motif (CMBM).

It belongs to the Integrator subunit 13 family. Component of the Integrator complex, composed of core subunits INTS1, INTS2, INTS3, INTS4, INTS5, INTS6, INTS7, INTS8, INTS9/RC74, INTS10, INTS11/CPSF3L, INTS12, INTS13, INTS14 and INTS15. The core complex associates with protein phosphatase 2A subunits PPP2CA and PPP2R1A, to form the Integrator-PP2A (INTAC) complex. INTS13 is part of the tail subcomplex, composed of INTS10, INTS13, INTS14 and INTS15. Interacts with transcription factors ZNF609 and ZNF655. Interacts with PAFAH1B1; this interaction may be required for proper recruitment of dynein complexes to the nuclear envelope at prophase. In terms of tissue distribution, widely expressed. Tends to be up-regulated in seminomas compared to normal testis.

Its subcellular location is the nucleus. The protein localises to the cytoplasm. Component of the integrator complex, a multiprotein complex that terminates RNA polymerase II (Pol II) transcription in the promoter-proximal region of genes. The integrator complex provides a quality checkpoint during transcription elongation by driving premature transcription termination of transcripts that are unfavorably configured for transcriptional elongation: the complex terminates transcription by (1) catalyzing dephosphorylation of the C-terminal domain (CTD) of Pol II subunit POLR2A/RPB1 and SUPT5H/SPT5, (2) degrading the exiting nascent RNA transcript via endonuclease activity and (3) promoting the release of Pol II from bound DNA. The integrator complex is also involved in terminating the synthesis of non-coding Pol II transcripts, such as enhancer RNAs (eRNAs), small nuclear RNAs (snRNAs), telomerase RNAs and long non-coding RNAs (lncRNAs). Within the integrator complex, INTS13 is part of the integrator tail module and acts as a platform for the recruitment of transcription factors at promoters. At prophase, mediates recruitment of cytoplasmic dynein to the nuclear envelope, a step important for proper centrosome-nucleus coupling. At G2/M phase, may be required for proper spindle formation and execution of cytokinesis. This Homo sapiens (Human) protein is Integrator complex subunit 13.